A 30-amino-acid polypeptide reads, in one-letter code: Sillucin (30 aa).

Disulfide bonds link cysteine 2-cysteine 7, cysteine 12-cysteine 24, cysteine 13-cysteine 30, and cysteine 14-cysteine 21.

The protein resides in the secreted. Functionally, sillucin is an antimicrobial agent produced by the thermophilic fungus Rhizomucor pusillus in liquid culture; it is effective against Gram-positive bacteria at the level of RNA metabolism. The protein is Sillucin of Rhizomucor pusillus.